Reading from the N-terminus, the 240-residue chain is DNA repair protein RecO (240 aa).

It belongs to the RecO family.

Its function is as follows. Involved in DNA repair and RecF pathway recombination. The sequence is that of DNA repair protein RecO from Wolbachia pipientis wMel.